The sequence spans 283 residues: ATP phosphoribosyltransferase (283 aa).

Belongs to the ATP phosphoribosyltransferase family. Long subfamily. In terms of assembly, equilibrium between an active dimeric form, an inactive hexameric form and higher aggregates. Interconversion between the various forms is largely reversible and is influenced by the natural substrates and inhibitors of the enzyme. The cofactor is Mg(2+).

Its subcellular location is the cytoplasm. The enzyme catalyses 1-(5-phospho-beta-D-ribosyl)-ATP + diphosphate = 5-phospho-alpha-D-ribose 1-diphosphate + ATP. It participates in amino-acid biosynthesis; L-histidine biosynthesis; L-histidine from 5-phospho-alpha-D-ribose 1-diphosphate: step 1/9. Its activity is regulated as follows. Feedback inhibited by histidine. Catalyzes the condensation of ATP and 5-phosphoribose 1-diphosphate to form N'-(5'-phosphoribosyl)-ATP (PR-ATP). Has a crucial role in the pathway because the rate of histidine biosynthesis seems to be controlled primarily by regulation of HisG enzymatic activity. In Mycobacterium sp. (strain KMS), this protein is ATP phosphoribosyltransferase.